Consider the following 367-residue polypeptide: PR domain zinc finger protein 12 (367 aa).

One can recognise an SET domain in the interval 86–203; sequence AEVIIAQSSI…PDQELLVWYG (118 aa). C2H2-type zinc fingers lie at residues 243-265, 271-293, and 299-323; these read MRCV…MRIH, FVCR…VRLH, and YKCQ…SARH. The interval 318 to 337 is disordered; that stretch reads QKSARHRPPSTALQAHSPAL.

Belongs to the class V-like SAM-binding methyltransferase superfamily. In terms of assembly, interacts with EHMT2. As to expression, not found in adult tissues except in dorsal root ganglia.

It is found in the nucleus. Functionally, transcriptional regulator necessary for the development of nociceptive neurons, playing a key role in determining the nociceptive lineage from neural crest cell progenitors. Initiates neurogenesis and activates downstream pro-neuronal transcription factors, such as NEUROD1, BRN3A, and ISL1, specifically within nociceptive neurons, while repressing non-nociceptor cell fates. Essential for the proper function of nociceptors in adults, influencing both their excitability and their gene expression, thereby impacting how these neurons respond to various pain stimuli. This Homo sapiens (Human) protein is PR domain zinc finger protein 12 (PRDM12).